The chain runs to 265 residues: Indole-3-glycerol phosphate synthase (265 aa).

This sequence belongs to the TrpC family.

It catalyses the reaction 1-(2-carboxyphenylamino)-1-deoxy-D-ribulose 5-phosphate + H(+) = (1S,2R)-1-C-(indol-3-yl)glycerol 3-phosphate + CO2 + H2O. Its pathway is amino-acid biosynthesis; L-tryptophan biosynthesis; L-tryptophan from chorismate: step 4/5. This is Indole-3-glycerol phosphate synthase from Xanthomonas campestris pv. campestris (strain 8004).